We begin with the raw amino-acid sequence, 226 residues long: Lipid phosphate phosphatase gamma (226 aa).

N-acetylmethionine is present on Met-1. Transmembrane regions (helical) follow at residues 24–44, 52–72, 102–122, 128–148, and 152–174; these read LGHF…GGFV, ELQG…NEFI, FMFF…GFWF, WIMN…RVYL, and TVAQ…FWVV.

This sequence belongs to the PA-phosphatase related phosphoesterase family. As to expression, expressed in root tips, root branch points, vascular tissue of cotyledons and leaves, pistil, anthers and filaments.

It localises to the plastid. It is found in the chloroplast inner membrane. With respect to regulation, inhibited by Mg(2+). Exhibits phosphatidate phosphatase (PAP) activity in vitro. May play a primary role as PAP in plastids. The chain is Lipid phosphate phosphatase gamma (LPPG) from Arabidopsis thaliana (Mouse-ear cress).